The following is a 356-amino-acid chain: Cyclin-dependent kinase 5 activator 1 (356 aa).

2 disordered regions span residues 1–53 (MGAN…AKES) and 66–99 (IQPVMSRRSLPKSGSSSEATSSKSSDSLVSFTRN). Composition is skewed to low complexity over residues 40–49 (SNTSSRSSSN) and 71–92 (SRRSLPKSGSSSEATSSKSSDS).

Belongs to the cyclin-dependent kinase 5 activator family. Heterodimer composed of a catalytic subunit cdk-5 and a regulatory subunit cdka-1. Interaction with cdka-1 is required for cdk-5 activation. As to expression, expressed in all classes of neurons in the ventral cord.

Its subcellular location is the cytoplasm. The protein resides in the cell projection. It localises to the dendrite. The protein localises to the axon. Its function is as follows. Activator of the kinase cdk-5. In several motor neurons, promotes the polarized trafficking of synaptic vesicles and dense-core vesicles. In the ventral nerve cord, regulates the synaptic localization of the glutamate receptor, glr-1. In DA motor neurons, regulates axonal transport of synaptic vesicle precursors by inhibiting dynein-mediated retrograde transport. Regulates the polarized distribution of dense-core vesicles in DB motor neurons. May regulate these processes in association with cdk-5. May also play a role in GABAergic synaptic vesicle localization in the ventral nerve cord. The protein is Cyclin-dependent kinase 5 activator 1 of Caenorhabditis elegans.